Reading from the N-terminus, the 429-residue chain is Serine hydroxymethyltransferase (429 aa).

Residues L126 and G130 to L132 contribute to the (6S)-5,6,7,8-tetrahydrofolate site. Position 235 is an N6-(pyridoxal phosphate)lysine (K235).

The protein belongs to the SHMT family. Homodimer. Pyridoxal 5'-phosphate is required as a cofactor.

The protein resides in the cytoplasm. The catalysed reaction is (6R)-5,10-methylene-5,6,7,8-tetrahydrofolate + glycine + H2O = (6S)-5,6,7,8-tetrahydrofolate + L-serine. The protein operates within one-carbon metabolism; tetrahydrofolate interconversion. It functions in the pathway amino-acid biosynthesis; glycine biosynthesis; glycine from L-serine: step 1/1. Catalyzes the reversible interconversion of serine and glycine with tetrahydrofolate (THF) serving as the one-carbon carrier. This reaction serves as the major source of one-carbon groups required for the biosynthesis of purines, thymidylate, methionine, and other important biomolecules. Also exhibits THF-independent aldolase activity toward beta-hydroxyamino acids, producing glycine and aldehydes, via a retro-aldol mechanism. The polypeptide is Serine hydroxymethyltransferase (Zymomonas mobilis subsp. mobilis (strain ATCC 31821 / ZM4 / CP4)).